A 128-amino-acid chain; its full sequence is Sulfurtransferase TusD (128 aa).

Cysteine 78 acts as the Cysteine persulfide intermediate in catalysis.

Belongs to the DsrE/TusD family. Heterohexamer, formed by a dimer of trimers. The hexameric TusBCD complex contains 2 copies each of TusB, TusC and TusD. The TusBCD complex interacts with TusE.

It is found in the cytoplasm. In terms of biological role, part of a sulfur-relay system required for 2-thiolation of 5-methylaminomethyl-2-thiouridine (mnm(5)s(2)U) at tRNA wobble positions. Accepts sulfur from TusA and transfers it in turn to TusE. The protein is Sulfurtransferase TusD of Escherichia fergusonii (strain ATCC 35469 / DSM 13698 / CCUG 18766 / IAM 14443 / JCM 21226 / LMG 7866 / NBRC 102419 / NCTC 12128 / CDC 0568-73).